Reading from the N-terminus, the 299-residue chain is Taste receptor type 2 member 16 (299 aa).

The Extracellular segment spans residues 1 to 5 (MVPTQ). A helical membrane pass occupies residues 6-26 (VTIFSIIMYVLESLVIIVQSC). Over 27–47 (TTVAVLFREWMHFQRLSPVET) the chain is Cytoplasmic. A helical transmembrane segment spans residues 48-68 (ILISLGISHFCLQWTSMLYNF). The Extracellular segment spans residues 69 to 82 (GTYSRPVLLFWKVS). A helical membrane pass occupies residues 83–103 (VVWEFMNILTFWLTSWLAVLY). Residues 104–125 (CVKVSSFTHPIFLWLRMKILKL) lie on the Cytoplasmic side of the membrane. The chain crosses the membrane as a helical span at residues 126-146 (VLWLILGALIASCLSIIPSVV). At 147-183 (KYHIQMELVTLDNLPKNNSLILRLQQFEWYFSNPLKM) the chain is on the extracellular side. Asn163 is a glycosylation site (N-linked (GlcNAc...) asparagine). A helical transmembrane segment spans residues 184–204 (IGFGIPFFVFLASIILLTVSL). The Cytoplasmic portion of the chain corresponds to 205–233 (VQHWVQMKHYSSSNSSLKAQFTVLKSLAT). Residues 234–254 (FFTFFTSYFLTIVISFIGTVF) traverse the membrane as a helical segment. The Extracellular segment spans residues 255–258 (DKKS). The helical transmembrane segment at 259 to 279 (WFWVCEAVIYGLVCIHFTSLM) threads the bilayer. At 280-299 (MSNPALKKALKLQFWSPEPS) the chain is on the cytoplasmic side.

This sequence belongs to the G-protein coupled receptor T2R family. Interacts with RTP3 and RTP4.

It is found in the cell membrane. Functionally, gustducin-coupled receptor implicated in the perception of bitter compounds in the oral cavity and the gastrointestinal tract. Signals through PLCB2 and the calcium-regulated cation channel TRPM5. This Mus musculus (Mouse) protein is Taste receptor type 2 member 16 (Tas2r16).